The following is a 216-amino-acid chain: DNA repair and recombination protein RadB (216 aa).

Belongs to the eukaryotic RecA-like protein family. RadB subfamily.

Its function is as follows. Involved in DNA repair and in homologous recombination. May regulate the cleavage reactions of the branch-structured DNA. Has a very weak ATPase activity that is not stimulated by DNA. Binds DNA but does not promote DNA strands exchange. This is DNA repair and recombination protein RadB from Methanococcus maripaludis (strain C5 / ATCC BAA-1333).